Consider the following 109-residue polypeptide: Small ribosomal subunit protein uS10 (109 aa).

It belongs to the universal ribosomal protein uS10 family. In terms of assembly, part of the 30S ribosomal subunit.

Its function is as follows. Involved in the binding of tRNA to the ribosomes. This is Small ribosomal subunit protein uS10 from Koribacter versatilis (strain Ellin345).